The chain runs to 505 residues: Maturase K (505 aa).

The protein belongs to the intron maturase 2 family. MatK subfamily.

Its subcellular location is the plastid. The protein resides in the chloroplast. Usually encoded in the trnK tRNA gene intron. Probably assists in splicing its own and other chloroplast group II introns. In Dioon edule (Virgin's palm), this protein is Maturase K.